Here is a 517-residue protein sequence, read N- to C-terminus: Tyrosine-protein kinase Fgr (517 aa).

G2 carries the N-myristoyl glycine lipid modification. Residues C3 and C6 are each lipidated (S-palmitoyl cysteine). The span at 17-33 (VGLEGDFRSQGAEERYY) shows a compositional bias: basic and acidic residues. A disordered region spans residues 17-46 (VGLEGDFRSQGAEERYYPDPTQGRSSSISP). Y32 bears the Phosphotyrosine mark. Position 50 is a phosphoserine (S50). Positions 65-126 (TGVTIFVALY…PSNYVAPVDS (62 aa)) constitute an SH3 domain. Residues 132-229 (WYFGKISRKD…GLCYLLTAPC (98 aa)) enclose the SH2 domain. Y196 is subject to Phosphotyrosine. S206 carries the phosphoserine modification. A Protein kinase domain is found at 251–504 (IALDRRLGTG…YLQSFLEDYF (254 aa)). Residues 257-265 (LGTGCFGDV) and K279 each bind ATP. The Proton acceptor role is filled by D370. Y400 is subject to Phosphotyrosine; by autocatalysis. Y511 carries the phosphotyrosine; by SRC modification.

It belongs to the protein kinase superfamily. Tyr protein kinase family. SRC subfamily. Interacts with ITGB1, ITGB2, MS4A2/FCER1B and FCGR2. Interacts (via SH2 domain) with SYK (tyrosine phosphorylated). Interacts (via SH2 domain) with FLT3 (tyrosine phosphorylated). Interacts with PTK2/FAK1. Interacts (via SH2 domain) with HCLS1 (tyrosine phosphorylated by SYK). Interacts with SIRPA and PTPNS1. Interacts (not phosphorylated on tyrosine residues) with CBL; FGR tyrosine phosphorylation promotes dissociation. Interacts with CLNK. In terms of processing, ubiquitinated. Becomes ubiquitinated in response to ITGB2 signaling; this does not lead to degradation. Phosphorylated. Autophosphorylated on tyrosine residues. Becomes phosphorylated in response to FCGR2 engagement, cell adhesion and signaling by ITGB2. Prior phosphorylation at Tyr-511 by SRC inhibits ulterior autophosphorylation at Tyr-400. Detected in brain cortex (at protein level).

The protein localises to the cell membrane. It localises to the cell projection. The protein resides in the ruffle membrane. It is found in the cytoplasm. Its subcellular location is the cytosol. The protein localises to the cytoskeleton. It localises to the mitochondrion inner membrane. The protein resides in the mitochondrion intermembrane space. It catalyses the reaction L-tyrosyl-[protein] + ATP = O-phospho-L-tyrosyl-[protein] + ADP + H(+). Its activity is regulated as follows. Activated by autophosphorylation. Prior phosphorylation at Tyr-511 by SRC inhibits ulterior autophosphorylation at Tyr-400. Activated by phorbol myristate acetate, phosphatidic acid and poly-Lys. Binding (via SH2 domain) of HCLS1 that is already phosphorylated by SYK strongly increases kinase activity. Functionally, non-receptor tyrosine-protein kinase that transmits signals from cell surface receptors devoid of kinase activity and contributes to the regulation of immune responses, including neutrophil, monocyte, macrophage and mast cell functions, cytoskeleton remodeling in response to extracellular stimuli, phagocytosis, cell adhesion and migration. Promotes mast cell degranulation, release of inflammatory cytokines and IgE-mediated anaphylaxis. Acts downstream of receptors that bind the Fc region of immunoglobulins, such as MS4A2/FCER1B, FCER1G and FCGR2. Acts downstream of ITGB1 and ITGB2, and regulates actin cytoskeleton reorganization, cell spreading and adhesion. Depending on the context, activates or inhibits cellular responses. Functions as a negative regulator of ITGB2 signaling, phagocytosis and SYK activity in monocytes. Required for normal ITGB1 and ITGB2 signaling, normal cell spreading and adhesion in neutrophils and macrophages. Functions as a positive regulator of cell migration and regulates cytoskeleton reorganization via RAC1 activation. Phosphorylates SYK (in vitro) and promotes SYK-dependent activation of AKT1 and MAP kinase signaling. Phosphorylates PLD2 in antigen-stimulated mast cells, leading to PLD2 activation and the production of the signaling molecules lysophosphatidic acid and diacylglycerol. Promotes activation of PIK3R1. Phosphorylates FASLG, and thereby regulates its ubiquitination and subsequent internalization. Phosphorylates ABL1. Promotes phosphorylation of CBL, CTTN, PIK3R1, PTK2/FAK1, PTK2B/PYK2 and VAV2. Phosphorylates HCLS1 that has already been phosphorylated by SYK, but not unphosphorylated HCLS1. Together with CLNK, it acts as a negative regulator of natural killer cell-activating receptors and inhibits interferon-gamma production. The sequence is that of Tyrosine-protein kinase Fgr (Fgr) from Rattus norvegicus (Rat).